The following is a 91-amino-acid chain: Putative septation protein SpoVG (91 aa).

This sequence belongs to the SpoVG family.

Functionally, could be involved in septation. This Clostridium beijerinckii (strain ATCC 51743 / NCIMB 8052) (Clostridium acetobutylicum) protein is Putative septation protein SpoVG.